Consider the following 231-residue polypeptide: Small ribosomal subunit protein uS2c (231 aa).

Belongs to the universal ribosomal protein uS2 family.

The protein resides in the plastid. It localises to the chloroplast. The protein is Small ribosomal subunit protein uS2c (rps2) of Gracilaria tenuistipitata var. liui (Red alga).